Reading from the N-terminus, the 84-residue chain is Large ribosomal subunit protein bL27 (84 aa).

The segment at 1-21 is disordered; it reads MAHKKGGGSTKNGRDSNPKYL.

Belongs to the bacterial ribosomal protein bL27 family.

The sequence is that of Large ribosomal subunit protein bL27 from Chlorobium limicola (strain DSM 245 / NBRC 103803 / 6330).